A 686-amino-acid polypeptide reads, in one-letter code: Band 4.1-like protein 4A (686 aa).

In terms of domain architecture, FERM spans 11–299 (FYCEVLLLDE…EHHTFFRMPE (289 aa)). Position 304 is a phosphoserine (Ser-304). The segment at 331 to 686 (RDLSIQLPRP…IQASRLKTET (356 aa)) is disordered. Positions 357 to 376 (AQTQPAESNSISRITANMEN) are enriched in polar residues. Ser-389, Ser-393, and Ser-402 each carry phosphoserine. Positions 418–428 (GPQSGLYNSPS) are enriched in polar residues. The segment covering 479 to 489 (RCNTSSGSESE) has biased composition (low complexity). 2 stretches are compositionally biased toward basic and acidic residues: residues 518-527 (VLRRQKEKNQ) and 547-561 (QAKE…KELV). Residues 588 to 601 (IRHSHSPRSYRQYR) show a composition bias toward basic residues. The span at 648 to 658 (GSKDSLMEEKP) shows a compositional bias: basic and acidic residues. Residues 673-686 (TIKTIQASRLKTET) are compositionally biased toward polar residues.

In terms of tissue distribution, expressed in many tissues. High levels of expression in brain, liver, thymus and peripheral blood leukocytes and low levels of expression in heart, kidney, testis and colon.

Its subcellular location is the cytoplasm. It is found in the cytoskeleton. This chain is Band 4.1-like protein 4A, found in Homo sapiens (Human).